A 215-amino-acid polypeptide reads, in one-letter code: Large ribosomal subunit protein uL4 (215 aa).

A disordered region spans residues 51–88; sequence KGMGEVSGTTKKPYRQKGTGNARQGSLRAPQFRTGGAV.

It belongs to the universal ribosomal protein uL4 family. Part of the 50S ribosomal subunit.

Its function is as follows. One of the primary rRNA binding proteins, this protein initially binds near the 5'-end of the 23S rRNA. It is important during the early stages of 50S assembly. It makes multiple contacts with different domains of the 23S rRNA in the assembled 50S subunit and ribosome. In terms of biological role, forms part of the polypeptide exit tunnel. This chain is Large ribosomal subunit protein uL4, found in Granulibacter bethesdensis (strain ATCC BAA-1260 / CGDNIH1).